The following is a 490-amino-acid chain: Histone-lysine N-methyltransferase, H3 lysine-9 specific (490 aa).

In terms of domain architecture, Chromo spans 8 to 69 (YEVERIVDEK…RKRRLKGSNS (62 aa)). 2 disordered regions span residues 61–133 (KRRL…TALT) and 150–190 (KKLG…KPRN). Basic and acidic residues predominate over residues 102 to 114 (FSRELNVKKENKK). The span at 115-133 (VFSSQTTKRQSRKQSTALT) shows a compositional bias: polar residues. Lys127 carries the post-translational modification N6,N6,N6-trimethyllysine; alternate. At Lys127 the chain carries N6-methyllysine; alternate. Over residues 155 to 168 (TRNEVKEESQKREL) the composition is skewed to basic and acidic residues. The span at 169–185 (VSNSIKEATSPKTSSIL) shows a compositional bias: polar residues. One can recognise a Pre-SET domain in the interval 258–325 (SGCNCSSLGG…ECPNRVVQRG (68 aa)). Zn(2+) is bound by residues Cys260, Cys262, Cys268, Cys276, Cys278, Cys307, Cys311, Cys313, and Cys317. In terms of domain architecture, SET spans 328 to 452 (LPLEIFKTKE…PLEELTFDYA (125 aa)). S-adenosyl-L-methionine is bound by residues 338 to 340 (KGW), Tyr381, Arg406, and 407 to 410 (FFNH). Cys412 is a Zn(2+) binding site. An autoregulatory loop region spans residues 453 to 472 (GAKDFSPVQSQKSQQNRISK). Lys455 bears the N6,N6,N6-trimethyllysine; by autocatalysis; alternate mark. At Lys455 the chain carries N6,N6-dimethyllysine; by autocatalysis; alternate. Position 455 is an N6-methyllysine; by autocatalysis; alternate (Lys455). Residue Lys464 is modified to N6-methyllysine. Residues 473 to 489 (LRRQCKCGSANCRGWLF) form the Post-SET domain. Zn(2+) contacts are provided by Cys477, Cys479, and Cys484. Residue 477–478 (CK) participates in S-adenosyl-L-methionine binding.

It belongs to the class V-like SAM-binding methyltransferase superfamily. Histone-lysine methyltransferase family. Suvar3-9 subfamily. As to quaternary structure, component of the Clr4 methyltransferase complex (ClrC) composed of at least clr4, rik1, pcu4, rbx1, raf1 and raf2. The cullin pcu4, rik1, raf1, raf2 and the ring-box protein rbx1 are components of an E3 ubiquitin ligase, whose activity is essential for heterochromatin assembly. Interacts directly with pcu4. Interacts with mlo3. In terms of processing, autocatalytic methylation of specific lysine residues in an internal loop (autoregulatory loop) promote a conformational switch that enhances the H3K9me activity of clr4.

It localises to the nucleus. It is found in the cytoplasm. The protein resides in the cytoskeleton. The protein localises to the microtubule organizing center. Its subcellular location is the spindle pole body. It localises to the chromosome. It catalyses the reaction L-lysyl(9)-[histone H3] + 3 S-adenosyl-L-methionine = N(6),N(6),N(6)-trimethyl-L-lysyl(9)-[histone H3] + 3 S-adenosyl-L-homocysteine + 3 H(+). It carries out the reaction N(6)-methyl-L-lysyl(9)-[histone H3] + S-adenosyl-L-methionine = N(6),N(6)-dimethyl-L-lysyl(9)-[histone H3] + S-adenosyl-L-homocysteine + H(+). The catalysed reaction is N(6),N(6)-dimethyl-L-lysyl(9)-[histone H3] + S-adenosyl-L-methionine = N(6),N(6),N(6)-trimethyl-L-lysyl(9)-[histone H3] + S-adenosyl-L-homocysteine + H(+). The enzyme catalyses L-lysyl-[protein] + S-adenosyl-L-methionine = N(6)-methyl-L-lysyl-[protein] + S-adenosyl-L-homocysteine + H(+). It catalyses the reaction N(6)-methyl-L-lysyl-[protein] + S-adenosyl-L-methionine = N(6),N(6)-dimethyl-L-lysyl-[protein] + S-adenosyl-L-homocysteine + H(+). It carries out the reaction N(6),N(6)-dimethyl-L-lysyl-[protein] + S-adenosyl-L-methionine = N(6),N(6),N(6)-trimethyl-L-lysyl-[protein] + S-adenosyl-L-homocysteine + H(+). The catalysed reaction is L-lysyl(9)-[histone H3] + S-adenosyl-L-methionine = N(6)-methyl-L-lysyl(9)-[histone H3] + S-adenosyl-L-homocysteine + H(+). With respect to regulation, an internal loop (autoregulatory loop) inhibits the catalytic activity of the enzyme by blocking the histone H3K9 substrate-binding pocket. Autocatalytic methylation of specific lysine residues in this loop promote a conformational switch that enhances the H3K9me activity of clr4. Its function is as follows. Histone methyltransferase which contributes to the establishment of heterochromatin by specifically methylating histone H3 to form H3K9me. Part of the Clr4 methyltransferase complex (ClrC). ClrC preferentially ubiquitylates H3K14 and ClrC-mediated H3 ubiquitination promotes clr4 methyltransferase activity. Clr4 functions as a reader and writer of H3K9 methylation. It sets the H3K9me mark and afterwards this H3K9me mark is recognized by the chromodomains of clr4 and swi6/HP1, which then recruit additional clr4 leading to the methylation of neighboring nucleosomes. H3K9me represents a specific tag for epigenetic transcriptional repression by recruiting swi6/HP1 to methylated histones which leads to transcriptional silencing within centromeric heterochromatin, telomeres, ribosomal DNA repeats, and the silent mating-type region. Clr4 methyltransferase activity promotes the assembly of a tripartite complex composed of ClrC and complexes involved in siRNA generation. Apart from H3K9, also methylates non-histone proteins such as mlo3. Interacts with mlo3 to promote the processing of centromeric and antisense RNAs. The polypeptide is Histone-lysine N-methyltransferase, H3 lysine-9 specific (clr4) (Schizosaccharomyces pombe (strain 972 / ATCC 24843) (Fission yeast)).